Here is a 159-residue protein sequence, read N- to C-terminus: 2-C-methyl-D-erythritol 2,4-cyclodiphosphate synthase (159 aa).

2 residues coordinate a divalent metal cation: aspartate 11 and histidine 13. 4-CDP-2-C-methyl-D-erythritol 2-phosphate contacts are provided by residues 11-13 (DVH) and 37-38 (HS). Residue histidine 45 coordinates a divalent metal cation. Residues 59 to 61 (DIG) and 64 to 68 (FPDSD) contribute to the 4-CDP-2-C-methyl-D-erythritol 2-phosphate site.

The protein belongs to the IspF family. As to quaternary structure, homotrimer. Requires a divalent metal cation as cofactor.

The catalysed reaction is 4-CDP-2-C-methyl-D-erythritol 2-phosphate = 2-C-methyl-D-erythritol 2,4-cyclic diphosphate + CMP. Its pathway is isoprenoid biosynthesis; isopentenyl diphosphate biosynthesis via DXP pathway; isopentenyl diphosphate from 1-deoxy-D-xylulose 5-phosphate: step 4/6. In terms of biological role, involved in the biosynthesis of isopentenyl diphosphate (IPP) and dimethylallyl diphosphate (DMAPP), two major building blocks of isoprenoid compounds. Catalyzes the conversion of 4-diphosphocytidyl-2-C-methyl-D-erythritol 2-phosphate (CDP-ME2P) to 2-C-methyl-D-erythritol 2,4-cyclodiphosphate (ME-CPP) with a corresponding release of cytidine 5-monophosphate (CMP). This chain is 2-C-methyl-D-erythritol 2,4-cyclodiphosphate synthase, found in Solibacter usitatus (strain Ellin6076).